Reading from the N-terminus, the 141-residue chain is Putative antiporter subunit mnhB2 (141 aa).

Helical transmembrane passes span 10–30, 35–55, 70–90, and 114–134; these read TVTK…FFAG, GGGF…FLAF, ILMI…MFFG, and ITLF…TVML.

Belongs to the CPA3 antiporters (TC 2.A.63) subunit B family. May form a heterooligomeric complex that consists of seven subunits: mnhA2, mnhB2, mnhC2, mnhD2, mnhE2, mnhF2 and mnhG2.

It localises to the cell membrane. This chain is Putative antiporter subunit mnhB2 (mnhB2), found in Staphylococcus aureus (strain Mu3 / ATCC 700698).